A 318-amino-acid polypeptide reads, in one-letter code: Thymidylate synthase (318 aa).

Residues arginine 25 and 180–181 (RR) contribute to the dUMP site. Cysteine 200 (nucleophile) is an active-site residue. Residues 220 to 223 (RSGD), asparagine 231, and 261 to 263 (HIY) each bind dUMP. (6R)-5,10-methylene-5,6,7,8-tetrahydrofolate is bound at residue aspartate 223. Residue alanine 317 participates in (6R)-5,10-methylene-5,6,7,8-tetrahydrofolate binding.

The protein belongs to the thymidylate synthase family. Bacterial-type ThyA subfamily. Homodimer.

It localises to the cytoplasm. It catalyses the reaction dUMP + (6R)-5,10-methylene-5,6,7,8-tetrahydrofolate = 7,8-dihydrofolate + dTMP. It participates in pyrimidine metabolism; dTTP biosynthesis. Functionally, catalyzes the reductive methylation of 2'-deoxyuridine-5'-monophosphate (dUMP) to 2'-deoxythymidine-5'-monophosphate (dTMP) while utilizing 5,10-methylenetetrahydrofolate (mTHF) as the methyl donor and reductant in the reaction, yielding dihydrofolate (DHF) as a by-product. This enzymatic reaction provides an intracellular de novo source of dTMP, an essential precursor for DNA biosynthesis. In Bacillus thuringiensis subsp. konkukian (strain 97-27), this protein is Thymidylate synthase.